Here is a 248-residue protein sequence, read N- to C-terminus: Glutamine-binding periplasmic protein (248 aa).

Positions 1–22 (MKSVLKVSLAALTLAFAVSSHA) are cleaved as a signal peptide.

The protein belongs to the bacterial solute-binding protein 3 family.

It localises to the periplasm. In terms of biological role, involved in a glutamine-transport system GlnHPQ. The protein is Glutamine-binding periplasmic protein (glnH) of Escherichia coli O157:H7.